We begin with the raw amino-acid sequence, 534 residues long: 2,3-bisphosphoglycerate-independent phosphoglycerate mutase (534 aa).

Residues D15 and S65 each coordinate Mn(2+). Catalysis depends on S65, which acts as the Phosphoserine intermediate. Substrate contacts are provided by residues H126, 156 to 157 (RD), R188, R194, 261 to 264 (RPDR), and K334. Mn(2+)-binding residues include D401, H405, D442, H443, and H460.

Belongs to the BPG-independent phosphoglycerate mutase family. The cofactor is Mn(2+).

It is found in the plastid. It localises to the chloroplast. The catalysed reaction is (2R)-2-phosphoglycerate = (2R)-3-phosphoglycerate. It participates in carbohydrate degradation; glycolysis; pyruvate from D-glyceraldehyde 3-phosphate: step 3/5. Functionally, catalyzes the interconversion of 2-phosphoglycerate and 3-phosphoglycerate. This chain is 2,3-bisphosphoglycerate-independent phosphoglycerate mutase, found in Pyropia yezoensis (Susabi-nori).